Here is a 144-residue protein sequence, read N- to C-terminus: Large ribosomal subunit protein uL13 (144 aa).

Belongs to the universal ribosomal protein uL13 family. As to quaternary structure, part of the 50S ribosomal subunit.

Functionally, this protein is one of the early assembly proteins of the 50S ribosomal subunit, although it is not seen to bind rRNA by itself. It is important during the early stages of 50S assembly. In Buchnera aphidicola subsp. Baizongia pistaciae (strain Bp), this protein is Large ribosomal subunit protein uL13.